A 511-amino-acid chain; its full sequence is Trafficking protein particle complex subunit 13 homolog (511 aa).

This sequence belongs to the TRAPPC13 family.

The polypeptide is Trafficking protein particle complex subunit 13 homolog (Dictyostelium discoideum (Social amoeba)).